We begin with the raw amino-acid sequence, 252 residues long: Cytochrome b6-f complex iron-sulfur subunit, chloroplastic (252 aa).

A helical transmembrane segment spans residues 94 to 114 (LVLAAVAPVVASAGGCYLYYF). Residues 141 to 235 (WFKSHKKNAR…VEDDNGKILL (95 aa)) form the Rieske domain. Positions 181, 183, 199, and 202 each coordinate [2Fe-2S] cluster. An intrachain disulfide couples Cys186 to Cys201.

It belongs to the Rieske iron-sulfur protein family. In terms of assembly, the 4 large subunits of the cytochrome b6-f complex are cytochrome b6, subunit IV (17 kDa polypeptide, petD), cytochrome f and the Rieske protein, while the 4 small subunits are petG, petL, petM and petN. The complex functions as a dimer. [2Fe-2S] cluster serves as cofactor.

Its subcellular location is the plastid. The protein resides in the chloroplast thylakoid membrane. The catalysed reaction is 2 oxidized [plastocyanin] + a plastoquinol + 2 H(+)(in) = 2 reduced [plastocyanin] + a plastoquinone + 4 H(+)(out). In terms of biological role, component of the cytochrome b6-f complex, which mediates electron transfer between photosystem II (PSII) and photosystem I (PSI), cyclic electron flow around PSI, and state transitions. The chain is Cytochrome b6-f complex iron-sulfur subunit, chloroplastic (petC) from Bigelowiella natans (Pedinomonas minutissima).